We begin with the raw amino-acid sequence, 141 residues long: Putative nickel-responsive regulator (141 aa).

Residues H80, H91, H93, and C99 each contribute to the Ni(2+) site.

It belongs to the transcriptional regulatory CopG/NikR family. Ni(2+) is required as a cofactor.

Functionally, transcriptional regulator. The polypeptide is Putative nickel-responsive regulator (Methanococcus maripaludis (strain C7 / ATCC BAA-1331)).